Consider the following 251-residue polypeptide: Hydroxyacylglutathione hydrolase (251 aa).

Zn(2+)-binding residues include His53, His55, Asp57, His58, His110, Asp127, and His165.

It belongs to the metallo-beta-lactamase superfamily. Glyoxalase II family. As to quaternary structure, monomer. Zn(2+) is required as a cofactor.

It carries out the reaction an S-(2-hydroxyacyl)glutathione + H2O = a 2-hydroxy carboxylate + glutathione + H(+). Its pathway is secondary metabolite metabolism; methylglyoxal degradation; (R)-lactate from methylglyoxal: step 2/2. Functionally, thiolesterase that catalyzes the hydrolysis of S-D-lactoyl-glutathione to form glutathione and D-lactic acid. In Escherichia coli O9:H4 (strain HS), this protein is Hydroxyacylglutathione hydrolase.